Consider the following 318-residue polypeptide: UPF0725 protein At3g44770 (318 aa).

This sequence belongs to the UPF0725 (EMB2204) family.

The protein is UPF0725 protein At3g44770 of Arabidopsis thaliana (Mouse-ear cress).